The primary structure comprises 297 residues: MRLELLVVLLVGLAALAPSGSTCCKTEPPRCETEPPRCETEPPRCETEPPRCETEPPRCETTTPKCETTPPTCRTEPPTCKTEPPTCRTEPPTCKTKPPTCRTEPPTCRTEPPTCKTKPPTCKTEPPTCKTEPPTCRTEPPTCKTEPPTCRTEPPTCKTEPPTCKTEPPTCKTEPPCEKHCTKRIKRHRTKRTKRSKSTKKIVHHHNRPGTTPESGCGCGSKNESGGGGSGCILKDLLTPKCPDSKPKPQASPKCKSDPKPKAASKTTSKPKPKACDSGKKNTTKKPRKTQPQKGGC.

The N-terminal stretch at 1–21 (MRLELLVVLLVGLAALAPSGS) is a signal peptide. 21 repeat units span residues 26–32 (TEPPRCE), 33–39 (TEPPRCE), 40–46 (TEPPRCE), 47–53 (TEPPRCE), 54–60 (TEPPRCE), 61–67 (TTTPKCE), 68–74 (TTPPTCR), 75–81 (TEPPTCK), 82–88 (TEPPTCR), 89–95 (TEPPTCK), 96–102 (TKPPTCR), 103–109 (TEPPTCR), 110–116 (TEPPTCK), 117–123 (TKPPTCK), 124–130 (TEPPTCK), 131–137 (TEPPTCR), 138–144 (TEPPTCK), 145–151 (TEPPTCR), 152–158 (TEPPTCK), 159–165 (TEPPTCK), and 166–172 (TEPPTCK). The tract at residues 26-84 (TEPPRCETEPPRCETEPPRCETEPPRCETEPPRCETTTPKCETTPPTCRTEPPTCKTEP) is disordered. The tract at residues 26–179 (TEPPRCETEP…TCKTEPPCEK (154 aa)) is 22 X 7 AA approximate tandem repeats of T-[ETK]-[PT]-P-[RKT]-C-[ERK]. Residues 27–58 (EPPRCETEPPRCETEPPRCETEPPRCETEPPR) show a composition bias toward basic and acidic residues. A compositionally biased stretch (low complexity) spans 59 to 84 (CETTTPKCETTPPTCRTEPPTCKTEP). A compositionally biased stretch (low complexity) spans 141–174 (PTCKTEPPTCRTEPPTCKTEPPTCKTEPPTCKTE). 2 disordered regions span residues 141-218 (PTCK…SGCG) and 243-297 (PDSK…KGGC). One copy of the 22; approximate repeat lies at 173-179 (TEPPCEK). Composition is skewed to basic residues over residues 181–208 (CTKR…HHNR) and 282–291 (NTTKKPRKTQ).

Salivary gland.

The protein resides in the secreted. The polypeptide is Salivary glue protein Sgs-4 (Sgs4) (Drosophila melanogaster (Fruit fly)).